We begin with the raw amino-acid sequence, 349 residues long: Anthranilate phosphoribosyltransferase (349 aa).

5-phospho-alpha-D-ribose 1-diphosphate-binding positions include Gly-82, 85–86 (GD), 92–95 (NVST), 110–118 (KHGNRAVSG), and Ser-122. Residue Gly-82 coordinates anthranilate. Ser-94 contributes to the Mg(2+) binding site. Anthranilate is bound at residue Asn-113. Arg-168 is an anthranilate binding site. Positions 227 and 228 each coordinate Mg(2+).

This sequence belongs to the anthranilate phosphoribosyltransferase family. In terms of assembly, homodimer. Requires Mg(2+) as cofactor.

The catalysed reaction is N-(5-phospho-beta-D-ribosyl)anthranilate + diphosphate = 5-phospho-alpha-D-ribose 1-diphosphate + anthranilate. It participates in amino-acid biosynthesis; L-tryptophan biosynthesis; L-tryptophan from chorismate: step 2/5. Catalyzes the transfer of the phosphoribosyl group of 5-phosphorylribose-1-pyrophosphate (PRPP) to anthranilate to yield N-(5'-phosphoribosyl)-anthranilate (PRA). This chain is Anthranilate phosphoribosyltransferase, found in Pseudomonas savastanoi pv. phaseolicola (strain 1448A / Race 6) (Pseudomonas syringae pv. phaseolicola (strain 1448A / Race 6)).